A 350-amino-acid polypeptide reads, in one-letter code: Cilia- and flagella-associated protein 36 (350 aa).

Residues Ser142 to Met167 adopt a coiled-coil conformation. Disordered stretches follow at residues Gly171–Ala233 and Arg301–Lys337. Over residues Leu177–Gln220 the composition is skewed to polar residues. Positions Val280 to Lys350 form a coiled coil.

The protein belongs to the CFAP36 family.

Its subcellular location is the nucleus. The protein resides in the cytoplasm. The protein localises to the cell projection. It is found in the cilium. It localises to the flagellum. The chain is Cilia- and flagella-associated protein 36 from Danio rerio (Zebrafish).